We begin with the raw amino-acid sequence, 402 residues long: Propionate kinase (402 aa).

Positions 11 and 18 each coordinate ATP. Asn-11 lines the Mg(2+) pocket. Arg-86 is a binding site for substrate. Asp-143 serves as the catalytic Proton donor/acceptor. ATP-binding positions include His-175, 203–207 (HLGNG), 278–280 (DLR), and 326–330 (GIGEN).

The protein belongs to the acetokinase family. TdcD subfamily. In terms of assembly, homodimer. Mg(2+) serves as cofactor.

It catalyses the reaction propanoate + ATP = propanoyl phosphate + ADP. Its pathway is amino-acid degradation; L-threonine degradation via propanoate pathway; propanoate from L-threonine: step 4/4. In terms of biological role, catalyzes the conversion of propionyl phosphate and ADP to propionate and ATP. This Enterobacter sp. (strain 638) protein is Propionate kinase.